Consider the following 276-residue polypeptide: Dermonecrotic toxin LafSicTox-betaIE2 (276 aa).

His-5 is an active-site residue. Mg(2+)-binding residues include Glu-25 and Asp-27. His-41 serves as the catalytic Nucleophile. 2 disulfides stabilise this stretch: Cys-45–Cys-51 and Cys-47–Cys-189. Asp-85 is a Mg(2+) binding site.

Belongs to the arthropod phospholipase D family. Class II subfamily. Mg(2+) serves as cofactor. As to expression, expressed by the venom gland.

The protein resides in the secreted. It catalyses the reaction an N-(acyl)-sphingosylphosphocholine = an N-(acyl)-sphingosyl-1,3-cyclic phosphate + choline. The catalysed reaction is an N-(acyl)-sphingosylphosphoethanolamine = an N-(acyl)-sphingosyl-1,3-cyclic phosphate + ethanolamine. The enzyme catalyses a 1-acyl-sn-glycero-3-phosphocholine = a 1-acyl-sn-glycero-2,3-cyclic phosphate + choline. It carries out the reaction a 1-acyl-sn-glycero-3-phosphoethanolamine = a 1-acyl-sn-glycero-2,3-cyclic phosphate + ethanolamine. Its function is as follows. Dermonecrotic toxins cleave the phosphodiester linkage between the phosphate and headgroup of certain phospholipids (sphingolipid and lysolipid substrates), forming an alcohol (often choline) and a cyclic phosphate. This toxin acts on sphingomyelin (SM). It may also act on ceramide phosphoethanolamine (CPE), lysophosphatidylcholine (LPC) and lysophosphatidylethanolamine (LPE), but not on lysophosphatidylserine (LPS), and lysophosphatidylglycerol (LPG). It acts by transphosphatidylation, releasing exclusively cyclic phosphate products as second products. Induces dermonecrosis, hemolysis, increased vascular permeability, edema, inflammatory response, and platelet aggregation. This is Dermonecrotic toxin LafSicTox-betaIE2 from Loxosceles aff. spinulosa (strain GJB-2008) (Recluse spider).